A 257-amino-acid polypeptide reads, in one-letter code: Imidazole glycerol phosphate synthase subunit HisF (257 aa).

Active-site residues include Asp-11 and Asp-130.

It belongs to the HisA/HisF family. As to quaternary structure, heterodimer of HisH and HisF.

The protein localises to the cytoplasm. It carries out the reaction 5-[(5-phospho-1-deoxy-D-ribulos-1-ylimino)methylamino]-1-(5-phospho-beta-D-ribosyl)imidazole-4-carboxamide + L-glutamine = D-erythro-1-(imidazol-4-yl)glycerol 3-phosphate + 5-amino-1-(5-phospho-beta-D-ribosyl)imidazole-4-carboxamide + L-glutamate + H(+). The protein operates within amino-acid biosynthesis; L-histidine biosynthesis; L-histidine from 5-phospho-alpha-D-ribose 1-diphosphate: step 5/9. In terms of biological role, IGPS catalyzes the conversion of PRFAR and glutamine to IGP, AICAR and glutamate. The HisF subunit catalyzes the cyclization activity that produces IGP and AICAR from PRFAR using the ammonia provided by the HisH subunit. This Actinobacillus pleuropneumoniae serotype 7 (strain AP76) protein is Imidazole glycerol phosphate synthase subunit HisF.